The primary structure comprises 91 residues: Acylphosphatase (91 aa).

The Acylphosphatase-like domain maps to Cys-3–His-91. Catalysis depends on residues Arg-18 and Asn-36.

It belongs to the acylphosphatase family.

The enzyme catalyses an acyl phosphate + H2O = a carboxylate + phosphate + H(+). This Dehalococcoides mccartyi (strain ATCC BAA-2100 / JCM 16839 / KCTC 5957 / BAV1) protein is Acylphosphatase (acyP).